A 301-amino-acid chain; its full sequence is Probable alpha-L-glutamate ligase 1 (301 aa).

Residues Leu104–Glu287 enclose the ATP-grasp domain. ATP contacts are provided by residues Lys141, Glu178–Tyr179, Asp187, and Arg211–Asn213. 3 residues coordinate Mg(2+): Asp248, Glu260, and Asn262. The Mn(2+) site is built by Asp248, Glu260, and Asn262.

It belongs to the RimK family. The cofactor is Mg(2+). It depends on Mn(2+) as a cofactor.

This is Probable alpha-L-glutamate ligase 1 from Shewanella baltica (strain OS155 / ATCC BAA-1091).